We begin with the raw amino-acid sequence, 135 residues long: Small ribosomal subunit protein uS9 (135 aa).

The segment at 96 to 135 (SADNRKPLKTEGHLSRDPRAKERRKYGLKKARKAPQFSKR) is disordered. Over residues 97-115 (ADNRKPLKTEGHLSRDPRA) the composition is skewed to basic and acidic residues. A compositionally biased stretch (basic residues) spans 116 to 135 (KERRKYGLKKARKAPQFSKR).

Belongs to the universal ribosomal protein uS9 family.

In Prochlorococcus marinus (strain MIT 9313), this protein is Small ribosomal subunit protein uS9.